Here is a 144-residue protein sequence, read N- to C-terminus: Gas vesicle protein A1 (144 aa).

Positions 72–144 (EAGPRKDPGL…APSRRKEEQE (73 aa)) are disordered. Residues 113-127 (KQARDDGGSERETSS) show a composition bias toward basic and acidic residues.

This sequence belongs to the gas vesicle GvpA family. The gas vesicle shell is 2 nm thick and consists of a single layer of this protein. It forms helical ribs nearly perpendicular to the long axis of the vesicle.

It is found in the gas vesicle shell. In terms of biological role, gas vesicles are hollow, gas filled proteinaceous nanostructures found in some microorganisms. During planktonic growth they allow positioning of the organism at a favorable depth for light or nutrient acquisition. GvpA forms the protein shell. It is not clear what function GVs perform in soil bacteria. This is Gas vesicle protein A1 from Streptomyces coelicolor (strain ATCC BAA-471 / A3(2) / M145).